The sequence spans 29 residues: Cyclotide mech-3 (29 aa).

A cross-link (cyclopeptide (Gly-Asn)) is located at residues 1–29 (GLPTCGETCTLGKCNTPKCTCNWPICYKN). Cystine bridges form between Cys-5-Cys-19, Cys-9-Cys-21, and Cys-14-Cys-26.

Post-translationally, this is a cyclic peptide. Contains 3 disulfide bonds.

Its function is as follows. Probably participates in a plant defense mechanism (Potential). Binds to and induces leakage in phospholipd membranes, particularly ones containing 1-palmitoyl-2-oleophosphatidylethanolamine (POPE). In vitro, displays cytotoxicity against cultured cells but no hemolytic activity towards fresh erythrocytes. In Melicytus chathamicus (Chatham Island mahoe), this protein is Cyclotide mech-3.